Here is a 355-residue protein sequence, read N- to C-terminus: Ubiquinone biosynthesis protein COQ4 homolog, mitochondrial (355 aa).

Positions 134, 135, 138, and 150 each coordinate Zn(2+).

The protein belongs to the COQ4 family. Component of a multi-subunit COQ enzyme complex. Zn(2+) is required as a cofactor.

The protein localises to the mitochondrion inner membrane. The enzyme catalyses a 4-hydroxy-3-methoxy-5-(all-trans-polyprenyl)benzoate + H(+) = a 2-methoxy-6-(all-trans-polyprenyl)phenol + CO2. It functions in the pathway cofactor biosynthesis; ubiquinone biosynthesis. Lyase that catalyzes the C1-decarboxylation of 4-hydroxy-3-methoxy-5-(all-trans-polyprenyl)benzoic acid into 2-methoxy-6-(all-trans-polyprenyl)phenol during ubiquinone biosynthesis. The chain is Ubiquinone biosynthesis protein COQ4 homolog, mitochondrial from Plasmodium chabaudi chabaudi.